Consider the following 399-residue polypeptide: Methylthioribose kinase (399 aa).

Residues asparagine 40, lysine 57, and 111-113 (EDL) each bind ATP. Aspartate 229 serves as a coordination point for substrate. An ATP-binding site is contributed by 246 to 248 (DAE). Arginine 344 provides a ligand contact to substrate.

Belongs to the methylthioribose kinase family. As to quaternary structure, homodimer.

It carries out the reaction 5-(methylsulfanyl)-D-ribose + ATP = 5-(methylsulfanyl)-alpha-D-ribose 1-phosphate + ADP + H(+). It participates in amino-acid biosynthesis; L-methionine biosynthesis via salvage pathway; S-methyl-5-thio-alpha-D-ribose 1-phosphate from S-methyl-5'-thioadenosine (hydrolase route): step 2/2. Functionally, catalyzes the phosphorylation of methylthioribose into methylthioribose-1-phosphate. This Enterobacter sp. (strain 638) protein is Methylthioribose kinase.